A 249-amino-acid chain; its full sequence is Triosephosphate isomerase (249 aa).

Residues Asn12 and Lys14 each contribute to the substrate site. The residue at position 14 (Lys14) is an N6-acetyllysine. 3'-nitrotyrosine is present on Tyr68. At Ser80 the chain carries Phosphoserine. Residue His96 is the Electrophile of the active site. The residue at position 106 (Ser106) is a Phosphoserine. A Glycyl lysine isopeptide (Lys-Gly) (interchain with G-Cter in SUMO1) cross-link involves residue Lys142. Lys149 is subject to N6-succinyllysine. Position 156 is an N6-acetyllysine; alternate (Lys156). Lys156 bears the N6-succinyllysine; alternate mark. Residue Glu166 is the Proton acceptor of the active site. Thr173 carries the post-translational modification Phosphothreonine. Lys194 is subject to N6-acetyllysine; alternate. The residue at position 194 (Lys194) is an N6-succinyllysine; alternate. The residue at position 194 (Lys194) is an N6-methyllysine; alternate. Ser198 carries the post-translational modification Phosphoserine. Tyr209 bears the 3'-nitrotyrosine mark. Phosphoserine is present on Ser212. Phosphothreonine is present on Thr214. Ser223 is modified (phosphoserine). Lys238 is modified (N6-acetyllysine).

Belongs to the triosephosphate isomerase family. Homodimer.

Its subcellular location is the cytoplasm. The enzyme catalyses dihydroxyacetone phosphate = methylglyoxal + phosphate. It catalyses the reaction D-glyceraldehyde 3-phosphate = dihydroxyacetone phosphate. It functions in the pathway carbohydrate degradation; glycolysis; D-glyceraldehyde 3-phosphate from glycerone phosphate: step 1/1. It participates in carbohydrate biosynthesis; gluconeogenesis. Functionally, triosephosphate isomerase is an extremely efficient metabolic enzyme that catalyzes the interconversion between dihydroxyacetone phosphate (DHAP) and D-glyceraldehyde-3-phosphate (G3P) in glycolysis and gluconeogenesis. It is also responsible for the non-negligible production of methylglyoxal a reactive cytotoxic side-product that modifies and can alter proteins, DNA and lipids. This Rattus norvegicus (Rat) protein is Triosephosphate isomerase (Tpi1).